The primary structure comprises 164 residues: UPF0178 protein RPB_3201 (164 aa).

Belongs to the UPF0178 family.

The sequence is that of UPF0178 protein RPB_3201 from Rhodopseudomonas palustris (strain HaA2).